The chain runs to 443 residues: ATP-dependent protease ATPase subunit HslU (443 aa).

ATP is bound by residues Ile-18 and 60–65 (GVGKTE). The interval 139 to 158 (AKNNWGQNETPAEPSSARQS) is disordered. ATP is bound by residues Asp-256, Glu-321, and Arg-393.

This sequence belongs to the ClpX chaperone family. HslU subfamily. As to quaternary structure, a double ring-shaped homohexamer of HslV is capped on each side by a ring-shaped HslU homohexamer. The assembly of the HslU/HslV complex is dependent on binding of ATP.

It localises to the cytoplasm. ATPase subunit of a proteasome-like degradation complex; this subunit has chaperone activity. The binding of ATP and its subsequent hydrolysis by HslU are essential for unfolding of protein substrates subsequently hydrolyzed by HslV. HslU recognizes the N-terminal part of its protein substrates and unfolds these before they are guided to HslV for hydrolysis. The sequence is that of ATP-dependent protease ATPase subunit HslU from Erwinia tasmaniensis (strain DSM 17950 / CFBP 7177 / CIP 109463 / NCPPB 4357 / Et1/99).